The sequence spans 653 residues: Laccase ustL (653 aa).

An N-terminal signal peptide occupies residues 1-20 (MTSLTGLALLLCVLASQSWA). Plastocyanin-like domains are found at residues 31–143 (WEKG…RPKR) and 173–362 (VLSD…ATQV). N-linked (GlcNAc...) asparagine glycans are attached at residues Asn-74, Asn-220, Asn-235, Asn-255, Asn-277, Asn-405, Asn-463, and Asn-479. The 132-residue stretch at 463–594 (NQTVGTEDEK…GGMSIALLDG (132 aa)) folds into the Plastocyanin-like 3 domain. Cu cation-binding residues include His-501, His-504, His-506, His-576, Cys-577, His-578, and His-582. N-linked (GlcNAc...) asparagine glycosylation is present at Asn-623.

Belongs to the multicopper oxidase family.

The catalysed reaction is 4 norrubrofusarin + O2 = 2 ustilaginoidin A + 2 H2O. It participates in secondary metabolite biosynthesis. Its function is as follows. Laccase; part of the gene cluster that mediates the biosynthesis of ustilaginoidins, dimeric gamma-naphthopyrones isolated from different fungal species. The first step in the biosynthesis of ustilaginoidins is the production of gamma-naphthopyrone precursor YWA1 by the non-reducing polyketide synthase ustP, via condensation of one acetyl-CoA starter unit with 6 malonyl-CoA units. YWA1 is then probably substrate of the ustZ to yield norrubrofusarin via a dehydration reaction. A key enzyme in the biosynthetic pathway is the laccase ustL, which catalyzes the oxidative dimerization of norrubrofusarin to ustilaginoidin A. It can produce the M- and P-atropisomers in varying amounts, depending on the reaction conditions. For the biosynthesis of 3-methylustilaginoid in derivatives such as chaetochromin A, a methylated derivative of YWA1 is required. The C-methylation is considered to be catalyzed by ustM, the phosphopantetheine attachment site of which indicates that it acts on the growing polyketide chain before release of the product. For the biosynthesis of chaetochromin A, it is assumed that saturation of the D2 double bond takes place before dimerization, and is probably catalyzed by an external reductase because no candidate gene was identified within the cluster. The sequence is that of Laccase ustL from Ustilaginoidea virens (Rice false smut fungus).